The primary structure comprises 350 residues: Glycogenin-1 (350 aa).

Threonine 2 is subject to N-acetylthreonine. Residues leucine 9, threonine 11, asparagine 12, and tyrosine 15 each coordinate UDP. The UDP-alpha-D-glucose site is built by leucine 9, threonine 11, asparagine 12, and tyrosine 15. Serine 44 is subject to Phosphoserine. Position 77 (arginine 77) interacts with UDP. UDP-alpha-D-glucose contacts are provided by arginine 77, lysine 86, aspartate 102, alanine 103, aspartate 104, asparagine 133, serine 134, aspartate 160, aspartate 163, and glutamine 164. Residues aspartate 102, alanine 103, and aspartate 104 each contribute to the UDP site. Aspartate 102 contacts Mn(2+). Aspartate 104 contributes to the Mn(2+) binding site. Tyrosine 195 carries an O-linked (Glc...) tyrosine glycan. 3 residues coordinate UDP: histidine 212, glycine 215, and lysine 218. Residue histidine 212 coordinates Mn(2+). Glycine 215 and lysine 218 together coordinate UDP-alpha-D-glucose. The segment at 301 to 333 (SHLSLGEIPAMAQPFVSSEERKERWEQGQADYM) is interaction with GYS1.

It belongs to the glycosyltransferase 8 family. Glycogenin subfamily. As to quaternary structure, part of the GYS1-GYG1 complex, a heterooctamer composed of a tetramer of GYS1 and 2 dimers of GYG1, where each GYS1 protomer binds to one GYG1 subunit (via GYG1 C-terminus); the GYS1 tetramer may dissociate from GYG1 dimers to continue glycogen polymerization on its own. May also form a heterooctamer complex with GYS2 (via GYG1 C-terminus). It depends on Mn(2+) as a cofactor. Self-glycosylated by the transfer of glucose residues from UDP-glucose to itself, forming an alpha-1,4-glycan of around 10 residues attached to Tyr-195. Post-translationally, phosphorylated. Highly expressed in skeletal muscle and heart, with lower levels in brain, lung, kidney and pancreas.

It is found in the cytoplasm. It localises to the nucleus. It carries out the reaction L-tyrosyl-[glycogenin] + UDP-alpha-D-glucose = alpha-D-glucosyl-L-tyrosyl-[glycogenin] + UDP + H(+). The enzyme catalyses [1,4-alpha-D-glucosyl](n)-L-tyrosyl-[glycogenin] + UDP-alpha-D-glucose = [1,4-alpha-D-glucosyl](n+1)-L-tyrosyl-[glycogenin] + UDP + H(+). It participates in glycan biosynthesis; glycogen biosynthesis. Inhibited by palladium ions. In terms of biological role, glycogenin participates in the glycogen biosynthetic process along with glycogen synthase and glycogen branching enzyme. It catalyzes the formation of a short alpha (1,4)-glucosyl chain covalently attached via a glucose 1-O-tyrosyl linkage to internal tyrosine residues and these chains act as primers for the elongation reaction catalyzed by glycogen synthase. The protein is Glycogenin-1 of Homo sapiens (Human).